A 1069-amino-acid polypeptide reads, in one-letter code: Calcium-transporting ATPase 10, plasma membrane-type (1069 aa).

A disordered region spans residues 1-29 (MSGQFNNSPRGEDKDVEAGTSSFTEYEDS). N-acetylserine is present on serine 2. At 2–180 (SGQFNNSPRG…NTYPQKKGRS (179 aa)) the chain is on the cytoplasmic side. Positions 42–53 (ERLRRWRQAALV) are interaction with calmodulin. A helical transmembrane segment spans residues 181 to 201 (FWRFVWEASQDLTLIILIVAA). Residues 202–219 (VASLALGIKTEGIEKGWY) lie on the Lumenal side of the membrane. A helical membrane pass occupies residues 220–240 (DGISIAFAVLLVIVVTATSDY). At 241 to 369 (RQSLQFQNLN…GGETPLQVRL (129 aa)) the chain is on the cytoplasmic side. A helical membrane pass occupies residues 370–389 (NGVATFIGIVGLTVAGVVLF). Topologically, residues 390 to 426 (VLVVRYFTGHTKNEQGGPQFIGGKTKFEHVLDDLVEI) are lumenal. Residues 427–444 (FTVAVTIVVVAVPEGLPL) form a helical membrane-spanning segment. Topologically, residues 445–844 (AVTLTLAYSM…RWGRSVYANI (400 aa)) are cytoplasmic. The 4-aspartylphosphate intermediate role is filled by aspartate 482. Residues aspartate 789 and aspartate 793 each coordinate Mg(2+). Residues 845–863 (QKFIQFQLTVNVAALVINV) traverse the membrane as a helical segment. The Lumenal portion of the chain corresponds to 864–874 (VAAISAGEVPL). Residues 875 to 895 (TAVQLLWVNLIMDTLGALALA) traverse the membrane as a helical segment. The Cytoplasmic portion of the chain corresponds to 896–915 (TEPPTDHLMDRAPVGRREPL). The chain crosses the membrane as a helical span at residues 916-938 (ITNIMWRNLFIQAMYQVTVLLIL). Residues 939–951 (NFRGISILHLKSK) lie on the Lumenal side of the membrane. The chain crosses the membrane as a helical span at residues 952–973 (PNAERVKNTVIFNAFVICQVFN). Over 974 to 991 (EFNARKPDEINIFRGVLR) the chain is Cytoplasmic. Residues 992-1013 (NHLFVGIISITIVLQVVIVEFL) form a helical membrane-spanning segment. The Lumenal portion of the chain corresponds to 1014–1023 (GTFASTTKLD). The helical transmembrane segment at 1024–1045 (WEMWLVCIGIGSISWPLAVIGK) threads the bilayer. Topologically, residues 1046–1069 (LIPVPETPVSQYFRINRWRRNSSG) are cytoplasmic.

It belongs to the cation transport ATPase (P-type) (TC 3.A.3) family. Type IIB subfamily.

The protein resides in the membrane. The enzyme catalyses Ca(2+)(in) + ATP + H2O = Ca(2+)(out) + ADP + phosphate + H(+). Its activity is regulated as follows. Activated by calmodulin. Its function is as follows. This magnesium-dependent enzyme catalyzes the hydrolysis of ATP coupled with the translocation of calcium from the cytosol into the endoplasmic reticulum. In Arabidopsis thaliana (Mouse-ear cress), this protein is Calcium-transporting ATPase 10, plasma membrane-type (ACA10).